We begin with the raw amino-acid sequence, 694 residues long: Cyclic nucleotide-gated channel beta-3 (694 aa).

At 1 to 210 (MLKSLTVKFN…SIDSYTDRVY (210 aa)) the chain is on the cytoplasmic side. 2 disordered regions span residues 24–82 (CPNL…DPEC) and 146–177 (ENFP…KEHQ). Composition is skewed to polar residues over residues 26–40 (NLSS…QGDN) and 153–168 (ASSQ…PKQE). Residues 211–234 (LLWLLLVTIAYNWNCWLLPVRLVF) traverse the membrane as a helical segment. Residues 235-241 (PCQTPDN) lie on the Extracellular side of the membrane. The helical transmembrane segment at 242–262 (KNYWIITDIVCDIIYLCDILL) threads the bilayer. Topologically, residues 263–291 (IQPRLQFVRGGEIIVDSNELKRNYRSSTK) are cytoplasmic. A helical transmembrane segment spans residues 292–309 (FRMDVASLLPFEVLYIFF). The Extracellular segment spans residues 310–312 (GVN). A helical transmembrane segment spans residues 313–327 (PIFRANRILKYTSFF). The Cytoplasmic segment spans residues 328–340 (EFNHHLESIMDKA). Residues 340–439 (AYVYRVIRTT…IGQMRDVIGA (100 aa)) are ion conduction pathway. A helical transmembrane segment spans residues 341-363 (YVYRVIRTTGYLLFLLHINACVY). Over 364–385 (YWASDYEGIGSTKWVYNGEGNK) the chain is Extracellular. A run of 2 helical transmembrane segments spans residues 386-412 (YLRC…SFEI) and 413-437 (VFQF…RDVI). Positions 399–402 (TIGG) are selectivity filter. Residues 438–694 (GAATANQNYF…KGKRKTTTQK (257 aa)) lie on the Cytoplasmic side of the membrane. Residues 442-518 (ANQNYFQACM…SIIDKVELFK (77 aa)) form a C-linker region. The cyclic nucleotide-binding domain stretch occupies residues 522 to 638 (TQMIYDLLLR…LLMKKAKILL (117 aa)). Residues glycine 583, glutamate 584, arginine 596, and threonine 597 each contribute to the 3',5'-cyclic GMP site.

Belongs to the cyclic nucleotide-gated cation channel (TC 1.A.1.5) family. CNGB3 subfamily. As to quaternary structure, forms heterotetrameric channels composed of CNGA3 and CNGB3 subunits with 3:1 stoichiometry. In terms of tissue distribution, small subset of retinal photoreceptor cells and testis.

The protein localises to the cell membrane. It carries out the reaction Ca(2+)(in) = Ca(2+)(out). The catalysed reaction is Na(+)(in) = Na(+)(out). The enzyme catalyses K(+)(in) = K(+)(out). It catalyses the reaction NH4(+)(in) = NH4(+)(out). It carries out the reaction Rb(+)(in) = Rb(+)(out). The catalysed reaction is Li(+)(in) = Li(+)(out). The enzyme catalyses Cs(+)(in) = Cs(+)(out). Functionally, pore-forming subunit of the cone cyclic nucleotide-gated channel. Mediates cone photoresponses at bright light converting transient changes in intracellular cGMP levels into electrical signals. In the dark, cGMP levels are high and keep the channel open enabling a steady inward current carried by Na(+) and Ca(2+) ions that leads to membrane depolarization and neurotransmitter release from synaptic terminals. Upon photon absorption cGMP levels decline leading to channel closure and membrane hyperpolarization that ultimately slows neurotransmitter release and signals the presence of light, the end point of the phototransduction cascade. Conducts cGMP- and cAMP-gated ion currents, with permeability for monovalent and divalent cations. This Mus musculus (Mouse) protein is Cyclic nucleotide-gated channel beta-3.